The chain runs to 196 residues: Imidazoleglycerol-phosphate dehydratase (196 aa).

This sequence belongs to the imidazoleglycerol-phosphate dehydratase family.

It localises to the cytoplasm. The catalysed reaction is D-erythro-1-(imidazol-4-yl)glycerol 3-phosphate = 3-(imidazol-4-yl)-2-oxopropyl phosphate + H2O. It functions in the pathway amino-acid biosynthesis; L-histidine biosynthesis; L-histidine from 5-phospho-alpha-D-ribose 1-diphosphate: step 6/9. The protein is Imidazoleglycerol-phosphate dehydratase of Phenylobacterium zucineum (strain HLK1).